A 204-amino-acid polypeptide reads, in one-letter code: Guanylate kinase (204 aa).

The 180-residue stretch at 5-184 folds into the Guanylate kinase-like domain; that stretch reads GLLIVLSGPS…AVQRIKDIIA (180 aa). 12–19 provides a ligand contact to ATP; it reads GPSGVGKG.

Belongs to the guanylate kinase family.

Its subcellular location is the cytoplasm. It carries out the reaction GMP + ATP = GDP + ADP. In terms of biological role, essential for recycling GMP and indirectly, cGMP. This is Guanylate kinase from Enterococcus faecalis (strain ATCC 700802 / V583).